The chain runs to 471 residues: Uronate isomerase (471 aa).

The protein belongs to the metallo-dependent hydrolases superfamily. Uronate isomerase family.

It carries out the reaction D-glucuronate = D-fructuronate. It catalyses the reaction aldehydo-D-galacturonate = keto-D-tagaturonate. It functions in the pathway carbohydrate metabolism; pentose and glucuronate interconversion. The sequence is that of Uronate isomerase from Latilactobacillus sakei subsp. sakei (strain 23K) (Lactobacillus sakei subsp. sakei).